We begin with the raw amino-acid sequence, 115 residues long: Cytochrome c oxidase subunit 3 (115 aa).

The next 2 helical transmembrane spans lie at 32–52 and 70–90; these read CLQGLLFTVLLGLYFSFLQGL and FFLATGFHGLHVLIGTIFLMI.

It belongs to the cytochrome c oxidase subunit 3 family. In terms of assembly, component of the cytochrome c oxidase (complex IV, CIV), a multisubunit enzyme composed of a catalytic core of 3 subunits and several supernumerary subunits. The complex exists as a monomer or a dimer and forms supercomplexes (SCs) in the inner mitochondrial membrane with ubiquinol-cytochrome c oxidoreductase (cytochrome b-c1 complex, complex III, CIII).

The protein localises to the mitochondrion inner membrane. The catalysed reaction is 4 Fe(II)-[cytochrome c] + O2 + 8 H(+)(in) = 4 Fe(III)-[cytochrome c] + 2 H2O + 4 H(+)(out). Functionally, component of the cytochrome c oxidase, the last enzyme in the mitochondrial electron transport chain which drives oxidative phosphorylation. The respiratory chain contains 3 multisubunit complexes succinate dehydrogenase (complex II, CII), ubiquinol-cytochrome c oxidoreductase (cytochrome b-c1 complex, complex III, CIII) and cytochrome c oxidase (complex IV, CIV), that cooperate to transfer electrons derived from NADH and succinate to molecular oxygen, creating an electrochemical gradient over the inner membrane that drives transmembrane transport and the ATP synthase. Cytochrome c oxidase is the component of the respiratory chain that catalyzes the reduction of oxygen to water. Electrons originating from reduced cytochrome c in the intermembrane space (IMS) are transferred via the dinuclear copper A center (CU(A)) of subunit 2 and heme A of subunit 1 to the active site in subunit 1, a binuclear center (BNC) formed by heme A3 and copper B (CU(B)). The BNC reduces molecular oxygen to 2 water molecules using 4 electrons from cytochrome c in the IMS and 4 protons from the mitochondrial matrix. This is Cytochrome c oxidase subunit 3 (COIII) from Artemia salina (Brine shrimp).